Consider the following 117-residue polypeptide: Minor capsid protein VP2 (117 aa).

The protein belongs to the lagovirus VP2 protein family. As to quaternary structure, homooligomer. The portal-like structure consists in 12 copies of VP2. Interacts with capsid protein VP1.

The protein resides in the virion. It localises to the host cytoplasm. Minor structural protein that forms a portal-like structure at a unique three-fold axis of symmetry, following binding to the host receptor. The channel formed by VP2 may allow the delivery of the viral genome through the host endosomal membrane. The polypeptide is Minor capsid protein VP2 (Oryctolagus cuniculus (Rabbit)).